Here is a 459-residue protein sequence, read N- to C-terminus: Ribulose bisphosphate carboxylase (459 aa).

N111 contributes to the substrate binding site. K166 (proton acceptor) is an active-site residue. Residue K168 participates in substrate binding. Mg(2+)-binding residues include K191, D193, and E194. K191 is modified (N6-carboxylysine). H287 functions as the Proton acceptor in the catalytic mechanism. Substrate is bound by residues R288, H321, and S368.

This sequence belongs to the RuBisCO large chain family. Type II subfamily. As to quaternary structure, homodimer. Mg(2+) serves as cofactor.

Its subcellular location is the cytoplasm. The catalysed reaction is 2 (2R)-3-phosphoglycerate + 2 H(+) = D-ribulose 1,5-bisphosphate + CO2 + H2O. The enzyme catalyses D-ribulose 1,5-bisphosphate + O2 = 2-phosphoglycolate + (2R)-3-phosphoglycerate + 2 H(+). In terms of biological role, ruBisCO catalyzes two reactions: the carboxylation of D-ribulose 1,5-bisphosphate, the primary event in carbon dioxide fixation, as well as the oxidative fragmentation of the pentose substrate. Both reactions occur simultaneously and in competition at the same active site. In Halothiobacillus neapolitanus (strain ATCC 23641 / c2) (Thiobacillus neapolitanus), this protein is Ribulose bisphosphate carboxylase.